A 690-amino-acid polypeptide reads, in one-letter code: Highly divergent homeobox (690 aa).

The homeobox 1 DNA-binding region spans 3–63 (LRSVFTVEQQ…NKRRKMSSKN (61 aa)). Disordered regions lie at residues 55-76 (KRRK…TSLS) and 112-132 (SPAS…QITE). Residues 64–76 (SESGTATTGTSLS) are compositionally biased toward low complexity. Residues 113–123 (PASSSSRQGTN) are compositionally biased toward polar residues. Glycyl lysine isopeptide (Lys-Gly) (interchain with G-Cter in SUMO2) cross-links involve residues lysine 135, lysine 140, lysine 144, lysine 163, lysine 172, lysine 194, lysine 212, lysine 221, and lysine 232. Residues 435-498 (ALQDRTQFSD…NRRRKYRLMG (64 aa)) constitute a DNA-binding region (homeobox 2). Residues 501 to 539 (VPPPRGGPADFSEQPESGSLSALTPGEEAGPEVGEDNDR) are disordered. A Glycyl lysine isopeptide (Lys-Gly) (interchain with G-Cter in SUMO2) cross-link involves residue lysine 613. Residues 664 to 690 (FNHASLEPDDTSFSVSSLSEKNVSESL) are disordered. A compositionally biased stretch (polar residues) spans 674–690 (TSFSVSSLSEKNVSESL).

Its subcellular location is the nucleus. This Homo sapiens (Human) protein is Highly divergent homeobox (HDX).